The sequence spans 131 residues: POU domain, class 3, transcription factor 3 (131 aa).

Positions 1–60 (FTQRRMKLGFTQADVGLALGTLYGNVFSQTTICRFEALQLSFKNMCKLKPLLNKWLEEAD) constitute a POU-specific domain. The homeobox DNA-binding region spans 78-131 (KRKKRTSIEVSVKGALESHFLKCPKPSAQEITNLADSLQLEKEVVRVWFCNNLQ).

Belongs to the POU transcription factor family. Class-3 subfamily. As to quaternary structure, homodimer. Brain.

The protein localises to the nucleus. Functionally, transcription factor that acts synergistically with SOX11 and SOX4. Plays a role in neuronal development. Is implicated in an enhancer activity at the embryonic met-mesencephalic junction; the enhancer element contains the octamer motif (5'-ATTTGCAT-3'). The chain is POU domain, class 3, transcription factor 3 (POU3F3) from Sus scrofa (Pig).